The chain runs to 135 residues: MSEMKIVVTSGKRKTATARAVIKPGKGRVRINSVPVEIHQPELARMKIMEPLIIAKELAEKVDIEVKTWGGGFMAQAEAARTAIARALLEFSGDEELRKAFLEYDRTLLVNDVRRKLPKIQGGRGARARRQTSYR.

This sequence belongs to the universal ribosomal protein uS9 family.

In Archaeoglobus fulgidus (strain ATCC 49558 / DSM 4304 / JCM 9628 / NBRC 100126 / VC-16), this protein is Small ribosomal subunit protein uS9 (rps9).